A 351-amino-acid polypeptide reads, in one-letter code: Holliday junction branch migration complex subunit RuvB (351 aa).

Residues 1-12 are compositionally biased toward acidic residues; it reads MGRFEDDAEVED. Positions 1–23 are disordered; that stretch reads MGRFEDDAEVEDREVSPALTVGE. Residues 1 to 191 are large ATPase domain (RuvB-L); the sequence is MGRFEDDAEV…FGFTAHMDFY (191 aa). Residues Leu30, Arg31, Gly72, Lys75, Thr76, Ser77, 138 to 140, Arg181, Tyr191, and Arg228 each bind ATP; that span reads EDF. Thr76 provides a ligand contact to Mg(2+). Positions 192 to 262 are small ATPAse domain (RuvB-S); the sequence is EPVELERVLA…IAKSALEVYD (71 aa). The interval 265–351 is head domain (RuvB-H); sequence ELGLDRLDRA…TGIGQAGLFD (87 aa). Residues Arg320 and Arg325 each coordinate DNA.

Belongs to the RuvB family. In terms of assembly, homohexamer. Forms an RuvA(8)-RuvB(12)-Holliday junction (HJ) complex. HJ DNA is sandwiched between 2 RuvA tetramers; dsDNA enters through RuvA and exits via RuvB. An RuvB hexamer assembles on each DNA strand where it exits the tetramer. Each RuvB hexamer is contacted by two RuvA subunits (via domain III) on 2 adjacent RuvB subunits; this complex drives branch migration. In the full resolvosome a probable DNA-RuvA(4)-RuvB(12)-RuvC(2) complex forms which resolves the HJ.

It localises to the cytoplasm. It catalyses the reaction ATP + H2O = ADP + phosphate + H(+). The RuvA-RuvB-RuvC complex processes Holliday junction (HJ) DNA during genetic recombination and DNA repair, while the RuvA-RuvB complex plays an important role in the rescue of blocked DNA replication forks via replication fork reversal (RFR). RuvA specifically binds to HJ cruciform DNA, conferring on it an open structure. The RuvB hexamer acts as an ATP-dependent pump, pulling dsDNA into and through the RuvAB complex. RuvB forms 2 homohexamers on either side of HJ DNA bound by 1 or 2 RuvA tetramers; 4 subunits per hexamer contact DNA at a time. Coordinated motions by a converter formed by DNA-disengaged RuvB subunits stimulates ATP hydrolysis and nucleotide exchange. Immobilization of the converter enables RuvB to convert the ATP-contained energy into a lever motion, pulling 2 nucleotides of DNA out of the RuvA tetramer per ATP hydrolyzed, thus driving DNA branch migration. The RuvB motors rotate together with the DNA substrate, which together with the progressing nucleotide cycle form the mechanistic basis for DNA recombination by continuous HJ branch migration. Branch migration allows RuvC to scan DNA until it finds its consensus sequence, where it cleaves and resolves cruciform DNA. This is Holliday junction branch migration complex subunit RuvB from Mycolicibacterium smegmatis (strain ATCC 700084 / mc(2)155) (Mycobacterium smegmatis).